The following is a 149-amino-acid chain: Deoxyuridine 5'-triphosphate nucleotidohydrolase (149 aa).

Residues 66-68, Asn79, 83-85, and Lys93 contribute to the substrate site; these read RSG and TID.

Belongs to the dUTPase family. Mg(2+) is required as a cofactor.

It carries out the reaction dUTP + H2O = dUMP + diphosphate + H(+). The protein operates within pyrimidine metabolism; dUMP biosynthesis; dUMP from dCTP (dUTP route): step 2/2. Functionally, this enzyme is involved in nucleotide metabolism: it produces dUMP, the immediate precursor of thymidine nucleotides and it decreases the intracellular concentration of dUTP so that uracil cannot be incorporated into DNA. In Corynebacterium glutamicum (strain ATCC 13032 / DSM 20300 / JCM 1318 / BCRC 11384 / CCUG 27702 / LMG 3730 / NBRC 12168 / NCIMB 10025 / NRRL B-2784 / 534), this protein is Deoxyuridine 5'-triphosphate nucleotidohydrolase.